The primary structure comprises 497 residues: Serine/threonine protein phosphatase 2A 57 kDa regulatory subunit B' epsilon isoform (497 aa).

Residues 12-71 (KFNKSDQHHQDNNNNNNNTSTNTVVRGSRTTTPAPSSVSNGESQTTAQSPSQTPNHPMFT) are disordered. The segment covering 23–34 (NNNNNNNTSTNT) has biased composition (low complexity). Over residues 35–71 (VVRGSRTTTPAPSSVSNGESQTTAQSPSQTPNHPMFT) the composition is skewed to polar residues.

It belongs to the phosphatase 2A regulatory subunit B56 family. In terms of assembly, PP2A consists of a common heteromeric enzyme, composed of a catalytic subunit (subunits C), a constant regulatory subunit (subunit A), and a variety of regulatory subunits such as subunits B (the R2/B/PR55/B55, R3/B''/PR72/PR130/PR59 and R5/B'/B56 families). As to expression, expressed ubiquitously.

It is found in the cytoplasm. Its function is as follows. The B regulatory subunit may modulate substrate selectivity and catalytic activity, and may also direct the localization of the catalytic enzyme to a particular subcellular compartment. This is Serine/threonine protein phosphatase 2A 57 kDa regulatory subunit B' epsilon isoform (B'EPSILON) from Arabidopsis thaliana (Mouse-ear cress).